A 394-amino-acid chain; its full sequence is Elongation factor Tu (394 aa).

A tr-type G domain is found at 10–204 (KPHVNVGTIG…HLDTYIPEPE (195 aa)). A G1 region spans residues 19 to 26 (GHVDHGKT). 19-26 (GHVDHGKT) contributes to the GTP binding site. Thr26 lines the Mg(2+) pocket. The tract at residues 60 to 64 (GITIN) is G2. A G3 region spans residues 81 to 84 (DCPG). GTP contacts are provided by residues 81–85 (DCPGH) and 136–139 (NKCD). The G4 stretch occupies residues 136–139 (NKCD). The segment at 174–176 (SAL) is G5.

It belongs to the TRAFAC class translation factor GTPase superfamily. Classic translation factor GTPase family. EF-Tu/EF-1A subfamily. Monomer.

The protein localises to the cytoplasm. It catalyses the reaction GTP + H2O = GDP + phosphate + H(+). In terms of biological role, GTP hydrolase that promotes the GTP-dependent binding of aminoacyl-tRNA to the A-site of ribosomes during protein biosynthesis. The polypeptide is Elongation factor Tu (Aeromonas salmonicida (strain A449)).